The primary structure comprises 250 residues: Probable transcriptional regulatory protein Cphamn1_0542 (250 aa).

The protein belongs to the TACO1 family.

It is found in the cytoplasm. The sequence is that of Probable transcriptional regulatory protein Cphamn1_0542 from Chlorobium phaeobacteroides (strain BS1).